Consider the following 282-residue polypeptide: Globin-related protein glb-13 (282 aa).

The segment at 1–46 (MGQENSKCPHQSLAEKRYKVERPKTKKVSSGSATERCLSTQSDEKN) is disordered. Residues 13–23 (LAEKRYKVERP) show a composition bias toward basic and acidic residues. Over residues 28–41 (VSSGSATERCLSTQ) the composition is skewed to polar residues. The Globin domain maps to 100 to 249 (FLTRRERILL…IISFMRRGFD (150 aa)). Heme b is bound by residues H162 and H194.

Belongs to the globin family.

Its function is as follows. Involved in oxidative stress resistance. The polypeptide is Globin-related protein glb-13 (Caenorhabditis elegans).